The sequence spans 536 residues: CTP synthase (536 aa).

The interval 1-267 is amidoligase domain; the sequence is MSKFVFVTGG…CKETLRCLDL (267 aa). A CTP-binding site is contributed by S13. S13 is a binding site for UTP. ATP is bound by residues 14-19 and D71; that span reads SIGKGI. Mg(2+) is bound by residues D71 and E141. Residues 148 to 150, 188 to 193, and K224 each bind CTP; these read DIE and KTKPTQ. UTP is bound by residues 188 to 193 and K224; that span reads KTKPTQ. The Glutamine amidotransferase type-1 domain occupies 292–534; that stretch reads KVALVGKYIE…IKASREKLEQ (243 aa). L-glutamine is bound at residue G354. C381 acts as the Nucleophile; for glutamine hydrolysis in catalysis. L-glutamine is bound by residues 382–385, E405, and R462; that span reads LGMQ. Catalysis depends on residues H507 and E509.

Belongs to the CTP synthase family. As to quaternary structure, homotetramer.

It catalyses the reaction UTP + L-glutamine + ATP + H2O = CTP + L-glutamate + ADP + phosphate + 2 H(+). It carries out the reaction L-glutamine + H2O = L-glutamate + NH4(+). The enzyme catalyses UTP + NH4(+) + ATP = CTP + ADP + phosphate + 2 H(+). Its pathway is pyrimidine metabolism; CTP biosynthesis via de novo pathway; CTP from UDP: step 2/2. Its activity is regulated as follows. Allosterically activated by GTP, when glutamine is the substrate; GTP has no effect on the reaction when ammonia is the substrate. The allosteric effector GTP functions by stabilizing the protein conformation that binds the tetrahedral intermediate(s) formed during glutamine hydrolysis. Inhibited by the product CTP, via allosteric rather than competitive inhibition. In terms of biological role, catalyzes the ATP-dependent amination of UTP to CTP with either L-glutamine or ammonia as the source of nitrogen. Regulates intracellular CTP levels through interactions with the four ribonucleotide triphosphates. This Prochlorococcus marinus (strain MIT 9515) protein is CTP synthase.